The primary structure comprises 399 residues: Acetate kinase (399 aa).

Residue asparagine 8 coordinates Mg(2+). Lysine 15 contacts ATP. Residue arginine 89 coordinates substrate. The active-site Proton donor/acceptor is aspartate 146. Residues 206-210, 283-285, and 331-335 contribute to the ATP site; these read HVGNG, DMR, and GMGEN. Mg(2+) is bound at residue glutamate 383.

The protein belongs to the acetokinase family. In terms of assembly, homodimer. The cofactor is Mg(2+). Mn(2+) serves as cofactor.

Its subcellular location is the cytoplasm. The enzyme catalyses acetate + ATP = acetyl phosphate + ADP. The protein operates within metabolic intermediate biosynthesis; acetyl-CoA biosynthesis; acetyl-CoA from acetate: step 1/2. Functionally, catalyzes the formation of acetyl phosphate from acetate and ATP. Can also catalyze the reverse reaction. This Streptococcus equi subsp. zooepidemicus (strain H70) protein is Acetate kinase.